We begin with the raw amino-acid sequence, 218 residues long: ATP-dependent dethiobiotin synthetase BioD (218 aa).

Asparagine 10–threonine 15 provides a ligand contact to ATP. A Mg(2+)-binding site is contributed by threonine 14. Lysine 35 is a catalytic residue. Residue threonine 39 coordinates substrate. Glutamate 116 contacts Mg(2+). Residues glutamate 116 to glycine 119 and leucine 176 to arginine 177 contribute to the ATP site.

The protein belongs to the dethiobiotin synthetase family. In terms of assembly, homodimer. Mg(2+) serves as cofactor.

The protein localises to the cytoplasm. It catalyses the reaction (7R,8S)-7,8-diammoniononanoate + CO2 + ATP = (4R,5S)-dethiobiotin + ADP + phosphate + 3 H(+). The protein operates within cofactor biosynthesis; biotin biosynthesis; biotin from 7,8-diaminononanoate: step 1/2. Catalyzes a mechanistically unusual reaction, the ATP-dependent insertion of CO2 between the N7 and N8 nitrogen atoms of 7,8-diaminopelargonic acid (DAPA, also called 7,8-diammoniononanoate) to form a ureido ring. The protein is ATP-dependent dethiobiotin synthetase BioD of Helicobacter pylori (strain J99 / ATCC 700824) (Campylobacter pylori J99).